Reading from the N-terminus, the 479-residue chain is MFS-type transporter lnaF (479 aa).

11 helical membrane passes run 47–67, 71–91, 104–124, 136–156, 177–197, 208–228, 250–270, 283–303, 306–326, 344–364, and 372–392; these read WIYL…GFTP, GLII…SGAI, LLCI…GPLI, WCFY…VFLL, LVGL…LSWG, IIGL…VQWW, IFSF…PIWF, LMSI…AVLV, IGFY…GAGL, IPFG…VQAV, and LAIA…ISVA. An N-linked (GlcNAc...) asparagine glycan is attached at Asn-416. Residues 442-462 form a helical membrane-spanning segment; the sequence is LAITQALYVGVALSSLAIVGA.

The protein belongs to the major facilitator superfamily. TCR/Tet family.

It localises to the cell membrane. Functionally, MFS-type transporter; part of the lnb gene cluster that mediates the biosynthesis of diastereomeric piperazines. Lna and lnb clusters encode sets of enzymes that produce overlapping sets of previously undescribed metabolites such as piperazinomycin-like metabolites or morpholine. The lna and lnb biosynthetic pathways appear to be part of a signaling network that controls the formation of sclerotia, a resilient overwintering structure. May be involved in the secretion of the metabolites produced by the lna and lnb clusters. This Aspergillus flavus (strain ATCC 200026 / FGSC A1120 / IAM 13836 / NRRL 3357 / JCM 12722 / SRRC 167) protein is MFS-type transporter lnaF.